Reading from the N-terminus, the 480-residue chain is MTQKNTGPRRRTAVACDRCRRRKIRCTGSDIPGQPCLACQKAHADCHFSTTSWRACRKKSAPLHCPSTNGKTNVLPSYASTPSLSPMTSSHFPYASDGTLISATNHCDDCSYNPHYLPVNSNGSSPSHTSSLDSIPGYASGSGPFKTPYRPVAVSESSSRSSFSMGSSEFASSTWSQSPMQSSLYVSPSSQPLDRFSPASFPSKETLTSSSLSSSVPRSVSLSNFADSNTSNYPESSLLPAAKVGNNGFVGSNVLGSMSYSNVEDSVRFQTDSVSQMSSKSLEHLPMLSEMTLSSSASFGASVSPKSTPGSNSTGAAVDTNSVHSNGGSDLDYSSYLTDSSAVDSPSLDADEVLRSFNLANDPIGAVDPLTLEIDQGSGSQLLGQQSFANDSLNAKQSSGKLGPLPPQSFNSSDYISFDEPSRYLSDDASLWPDQYVDKVQPLATMKTCNPAVFSSNTSLDDMFFFIRDFDEDHPIQTAY.

Positions 16–46 (CDRCRRRKIRCTGSDIPGQPCLACQKAHADC) form a DNA-binding region, zn(2)-C6 fungal-type. Over residues 298–307 (SFGASVSPKS) the composition is skewed to low complexity. Positions 298–325 (SFGASVSPKSTPGSNSTGAAVDTNSVHS) are disordered. The segment covering 308–325 (TPGSNSTGAAVDTNSVHS) has biased composition (polar residues).

It localises to the cytoplasm. It is found in the nucleus. This is an uncharacterized protein from Schizosaccharomyces pombe (strain 972 / ATCC 24843) (Fission yeast).